Reading from the N-terminus, the 614-residue chain is Numb-like protein (614 aa).

Disordered regions lie at residues 1 to 68, 223 to 283, 371 to 420, 448 to 468, and 539 to 614; these read MSRS…QWQA, GSFR…PVAA, FASA…LEEV, QQQQATSVPPMPTMAPTLQPF, and LGKA…EIEL. A PID domain is found at 74-223; the sequence is RKGTCSFPVR…ASRTSFAREG (150 aa). 2 positions are modified to phosphoserine: S224 and S228. The segment covering 233 to 245 has biased composition (basic and acidic residues); that stretch reads PAEREAGDKKKAE. Residues 246-260 are compositionally biased toward low complexity; the sequence is AAAAPAVAPGPAQPG. S263 is modified (phosphoserine). T279 bears the Phosphothreonine mark. The span at 371–390 shows a compositional bias: low complexity; that stretch reads FASAGAPVPGPPSATTGTSA. Positions 409–418 are enriched in basic and acidic residues; sequence TPSEAERWLE. The residue at position 411 (S411) is a Phosphoserine. The span at 563-578 shows a compositional bias: pro residues; that stretch reads NGAPWPPEPAPAPAPE.

In terms of assembly, associates with EPS15 and NOTCH1. Interacts (via PTB domain) with MAP3K7IP2 (via C-terminal). Interacts (via C-terminal) with TRAF6 (via TRAF domains).

Its subcellular location is the cytoplasm. Its function is as follows. Plays a role in the process of neurogenesis. Required throughout embryonic neurogenesis to maintain neural progenitor cells, also called radial glial cells (RGCs), by allowing their daughter cells to choose progenitor over neuronal cell fate. Not required for the proliferation of neural progenitor cells before the onset of embryonic neurogenesis. Also required postnatally in the subventricular zone (SVZ) neurogenesis by regulating SVZ neuroblasts survival and ependymal wall integrity. Negative regulator of NF-kappa-B signaling pathway. The inhibition of NF-kappa-B activation is mediated at least in part, by preventing MAP3K7IP2 to interact with polyubiquitin chains of TRAF6 and RIPK1 and by stimulating the 'Lys-48'-linked polyubiquitination and degradation of TRAF6 in cortical neurons. In Rattus norvegicus (Rat), this protein is Numb-like protein (Numbl).